A 440-amino-acid chain; its full sequence is Thymidine phosphorylase (440 aa).

This sequence belongs to the thymidine/pyrimidine-nucleoside phosphorylase family. In terms of assembly, homodimer.

It carries out the reaction thymidine + phosphate = 2-deoxy-alpha-D-ribose 1-phosphate + thymine. It functions in the pathway pyrimidine metabolism; dTMP biosynthesis via salvage pathway; dTMP from thymine: step 1/2. Functionally, the enzymes which catalyze the reversible phosphorolysis of pyrimidine nucleosides are involved in the degradation of these compounds and in their utilization as carbon and energy sources, or in the rescue of pyrimidine bases for nucleotide synthesis. This chain is Thymidine phosphorylase, found in Salmonella arizonae (strain ATCC BAA-731 / CDC346-86 / RSK2980).